A 623-amino-acid chain; its full sequence is tRNA uridine 5-carboxymethylaminomethyl modification enzyme MnmG (623 aa).

Residue 12 to 17 participates in FAD binding; the sequence is GAGHAG. 272–286 lines the NAD(+) pocket; sequence GPRYCPSIEDKINRF.

Belongs to the MnmG family. As to quaternary structure, homodimer. Heterotetramer of two MnmE and two MnmG subunits. Requires FAD as cofactor.

The protein localises to the cytoplasm. Functionally, NAD-binding protein involved in the addition of a carboxymethylaminomethyl (cmnm) group at the wobble position (U34) of certain tRNAs, forming tRNA-cmnm(5)s(2)U34. This chain is tRNA uridine 5-carboxymethylaminomethyl modification enzyme MnmG, found in Christiangramia forsetii (strain DSM 17595 / CGMCC 1.15422 / KT0803) (Gramella forsetii).